The following is a 248-amino-acid chain: Ubiquinone biosynthesis O-methyltransferase (248 aa).

Positions 40, 71, 92, and 135 each coordinate S-adenosyl-L-methionine.

It belongs to the methyltransferase superfamily. UbiG/COQ3 family.

It carries out the reaction a 3-demethylubiquinol + S-adenosyl-L-methionine = a ubiquinol + S-adenosyl-L-homocysteine + H(+). It catalyses the reaction a 3-(all-trans-polyprenyl)benzene-1,2-diol + S-adenosyl-L-methionine = a 2-methoxy-6-(all-trans-polyprenyl)phenol + S-adenosyl-L-homocysteine + H(+). Its pathway is cofactor biosynthesis; ubiquinone biosynthesis. Its function is as follows. O-methyltransferase that catalyzes the 2 O-methylation steps in the ubiquinone biosynthetic pathway. The chain is Ubiquinone biosynthesis O-methyltransferase from Dinoroseobacter shibae (strain DSM 16493 / NCIMB 14021 / DFL 12).